Consider the following 1388-residue polypeptide: DNA-directed RNA polymerase subunit beta'' (1388 aa).

Cys-224, Cys-294, Cys-301, and Cys-304 together coordinate Zn(2+).

It belongs to the RNA polymerase beta' chain family. RpoC2 subfamily. In plastids the minimal PEP RNA polymerase catalytic core is composed of four subunits: alpha, beta, beta', and beta''. When a (nuclear-encoded) sigma factor is associated with the core the holoenzyme is formed, which can initiate transcription. The cofactor is Zn(2+).

It localises to the plastid. It is found in the chloroplast. It catalyses the reaction RNA(n) + a ribonucleoside 5'-triphosphate = RNA(n+1) + diphosphate. DNA-dependent RNA polymerase catalyzes the transcription of DNA into RNA using the four ribonucleoside triphosphates as substrates. This chain is DNA-directed RNA polymerase subunit beta'', found in Phalaenopsis aphrodite subsp. formosana (Moth orchid).